A 123-amino-acid polypeptide reads, in one-letter code: Large ribosomal subunit protein uL14 (123 aa).

The protein belongs to the universal ribosomal protein uL14 family. In terms of assembly, part of the 50S ribosomal subunit. Forms a cluster with proteins L3 and L19. In the 70S ribosome, L14 and L19 interact and together make contacts with the 16S rRNA in bridges B5 and B8.

Binds to 23S rRNA. Forms part of two intersubunit bridges in the 70S ribosome. The chain is Large ribosomal subunit protein uL14 from Aliivibrio fischeri (strain ATCC 700601 / ES114) (Vibrio fischeri).